Here is a 366-residue protein sequence, read N- to C-terminus: Lysophosphatidic acid receptor 1-B (366 aa).

Residues 1 to 52 are Extracellular-facing; sequence MTSLSEFVSEPIGMMSQTSAASESQCYYNETIAFFYNRSGKYLDTEWNAVSK. 2 disulfide bridges follow: C26/C192 and C190/C197. N-linked (GlcNAc...) asparagine glycosylation is found at N29 and N37. Position 41 (K41) interacts with a 1-acyl-sn-glycero-3-phosphate. A helical transmembrane segment spans residues 53-77; sequence LVMGLGITVCIFIMLANLLVMVAIY. Residues 78–85 lie on the Cytoplasmic side of the membrane; sequence VNRRFHFP. Residues 86–109 form a helical membrane-spanning segment; it reads IYYLMANLAAADFFAGLAYFYLMF. Topologically, residues 110–123 are extracellular; the sequence is NTGPNTRRLTVSTW. Residues 124 to 146 form a helical membrane-spanning segment; the sequence is LLRQGLIDTSLTASVANLLAIAI. 126–131 is an a 1-acyl-sn-glycero-3-phosphate binding site; it reads RQGLID. At 147 to 165 the chain is on the cytoplasmic side; that stretch reads ERHITVFRMQLHTRMSNRR. Residues 166-186 form a helical membrane-spanning segment; the sequence is VVVVIVVIWTVAIVMGAIPSV. Over 187-206 the chain is Extracellular; that stretch reads GWNCICDLEHCSNMAPLYSD. A helical membrane pass occupies residues 207 to 227; the sequence is SYLIFWTIFNLVTFVVMVVLY. W212 contacts a 1-acyl-sn-glycero-3-phosphate. The Cytoplasmic portion of the chain corresponds to 228 to 257; that stretch reads AHIFVYVRQRTMRMSRHSSGPRRNRDTMMS. A helical membrane pass occupies residues 258-282; it reads LLKTVVIVLGAFIVCWTPGLVLLLL. The Extracellular portion of the chain corresponds to 283-296; sequence DVCCPQCNILAYEK. Residues C286 and C289 are joined by a disulfide bond. Residues 297–317 form a helical membrane-spanning segment; it reads FFLLLAEFNSAMNPIIYSYRD. Topologically, residues 318-366 are cytoplasmic; sequence KEMSATFKQILCCQRTENVNGPTEGSDRSASSLNHTILAGVHSNDHSVV.

The protein belongs to the G-protein coupled receptor 1 family. In terms of tissue distribution, expressed at high levels in oocytes and at lower levels in brain and spinal cord. Below detection level in lung, heart, kidney, liver, muscle, stomach, and intestine.

The protein resides in the cell surface. It is found in the cell membrane. The protein localises to the endosome. In terms of biological role, receptor for lysophosphatidic acid (LPA). Plays a role in the reorganization of the actin cytoskeleton, cell migration, differentiation and proliferation, and thereby contributes to the responses to tissue damage and infectious agents. Activates downstream signaling cascades via the G(i)/G(o), G(12)/G(13), and G(q) families of heteromeric G proteins. Signaling inhibits adenylyl cyclase activity and decreases cellular cAMP levels. Signaling triggers an increase of cytoplasmic Ca(2+) levels. Signaling leads to the activation of phospholipase C (PLC) and the formation of inositol 1,4,5-trisphosphate. Signaling mediates activation of down-stream MAP kinases. Contributes to the regulation of cell shape. Promotes Rho-dependent reorganization of the actin cytoskeleton in neuronal cells and neurite retraction. Promotes the activation of Rho and the formation of actin stress fibers. Promotes formation of lamellipodia at the leading edge of migrating cells via activation of Rac. Through its function as lysophosphatidic acid receptor, plays a role in chemotaxis and cell migration, including responses to injury and wounding. Promotes cell proliferation in response to lysophosphatidic acid. The polypeptide is Lysophosphatidic acid receptor 1-B (lpar1-b) (Xenopus laevis (African clawed frog)).